Consider the following 1121-residue polypeptide: Transcription factor CSR2 (1121 aa).

Phosphoserine occurs at positions 23, 46, and 127. Disordered regions lie at residues 273 to 342, 513 to 532, 579 to 600, and 837 to 860; these read PLHT…RSLP, HTQL…PQKL, LKRN…GLAM, and IPQD…LQTS. Residues 276-310 show a composition bias toward polar residues; the sequence is TQRTSPSNTARTGNAMDTSNSDRASPASNNNTTDA. Low complexity-rich tracts occupy residues 318–329, 519–529, and 582–597; these read NNNPMNNNNSPA, SRPRSSSISSP, and NNSN…SSSG. At Ser-327 the chain carries Phosphoserine. The segment covering 837–846 has biased composition (basic and acidic residues); the sequence is IPQDKNHNEV. A Glycyl lysine isopeptide (Lys-Gly) (interchain with G-Cter in ubiquitin) cross-link involves residue Lys-841. The span at 847-860 shows a compositional bias: polar residues; sequence NDTNGNSNTSLQTS. The residue at position 987 (Ser-987) is a Phosphoserine. Over residues 999–1009 the composition is skewed to polar residues; sequence KTTAVSDSSNG. Disordered stretches follow at residues 999–1022 and 1075–1121; these read KTTA…QARP and TPRY…EISS. Positions 1084–1093 are enriched in low complexity; the sequence is TNTDYNYNDN.

This sequence belongs to the CSR2 family. Post-translationally, phosphorylated by CDC28.

It is found in the cytoplasm. Its subcellular location is the nucleus. Transcription factor involved in the regulation of fermentation and aerobic oxidation. Acts as a repressor of CYC1, which is involved in electron flow through the mitochondria under aerobic condition. Required for pseudohyphal formation upon nitrogen starvation. May be involved in viability at stationary phase and aging. The sequence is that of Transcription factor CSR2 (CSR2) from Saccharomyces cerevisiae (strain ATCC 204508 / S288c) (Baker's yeast).